The following is a 284-amino-acid chain: NAD kinase (284 aa).

The Proton acceptor role is filled by Asp67. Residues 67–68 (DG), 141–142 (ND), Arg152, Lys169, Asp171, 182–187 (TGYSLS), and Gln241 contribute to the NAD(+) site.

It belongs to the NAD kinase family. A divalent metal cation serves as cofactor.

It localises to the cytoplasm. It carries out the reaction NAD(+) + ATP = ADP + NADP(+) + H(+). In terms of biological role, involved in the regulation of the intracellular balance of NAD and NADP, and is a key enzyme in the biosynthesis of NADP. Catalyzes specifically the phosphorylation on 2'-hydroxyl of the adenosine moiety of NAD to yield NADP. The polypeptide is NAD kinase (Geobacter sulfurreducens (strain ATCC 51573 / DSM 12127 / PCA)).